The chain runs to 124 residues: MKTVAFLAVVVLFAAFACASCSSSYAAPAPAPAAAPASSYSSVPAPPCPKNYLFSCQPNLVPAPCAQQAAPAAYGSAGAYTEQVPSYIGFAPYQQLQQYHQRIGNAALIDELRSLGQGIQGQQY.

The first 19 residues, 1-19, serve as a signal peptide directing secretion; that stretch reads MKTVAFLAVVVLFAAFACA. The VM domain maps to 42-81; sequence SVPAPPCPKNYLFSCQPNLVPAPCAQQAAPAAYGSAGAYT.

The protein belongs to the vitelline membrane family.

It localises to the secreted. Functionally, major early eggshell protein. The protein is Vitelline membrane protein Vm32E of Drosophila pseudoobscura pseudoobscura (Fruit fly).